The following is a 379-amino-acid chain: Alanine racemase (379 aa).

Lysine 40 acts as the Proton acceptor; specific for D-alanine in catalysis. Lysine 40 bears the N6-(pyridoxal phosphate)lysine mark. Residue arginine 138 coordinates substrate. Residue tyrosine 267 is the Proton acceptor; specific for L-alanine of the active site. Substrate is bound at residue methionine 315.

The protein belongs to the alanine racemase family. Requires pyridoxal 5'-phosphate as cofactor.

It catalyses the reaction L-alanine = D-alanine. Its pathway is amino-acid biosynthesis; D-alanine biosynthesis; D-alanine from L-alanine: step 1/1. Functionally, catalyzes the interconversion of L-alanine and D-alanine. May also act on other amino acids. The polypeptide is Alanine racemase (alr) (Halothermothrix orenii (strain H 168 / OCM 544 / DSM 9562)).